The primary structure comprises 660 residues: Polyadenylation factor subunit 2 (660 aa).

The span at 1–12 shows a compositional bias: basic and acidic residues; the sequence is MSYEPRGDHDKG. The tract at residues 1-32 is disordered; the sequence is MSYEPRGDHDKGYGGGGGHDGLPPRNRGRRPV. WD repeat units follow at residues 94-133, 136-176, 177-216, 219-258, 261-301, 304-344, and 376-415; these read KIKH…FETI, AHDS…ESIR, GHTD…TDMT, GHGW…CLTT, GHKN…DIAL, GHEK…TAPD, and AHDF…EAPE. The tract at residues 562-660 is disordered; the sequence is KAGYQPPPPP…QSKGNYTRVR (99 aa). A compositionally biased stretch (pro residues) spans 566-610; sequence QPPPPPGSAGAPMPPPGILPPGLIPPPGAAGFPMPPPGFAPPPLI.

Its subcellular location is the nucleus. Functionally, required for 3'-end cleavage and polyadenylation of pre-mRNAs. Also involved in chromosome segregation where it has a role in chromosome attachment to the mitotic spindle. In Neurospora crassa (strain ATCC 24698 / 74-OR23-1A / CBS 708.71 / DSM 1257 / FGSC 987), this protein is Polyadenylation factor subunit 2 (paa-1).